We begin with the raw amino-acid sequence, 152 residues long: Zinc finger SWIM domain-containing protein 7 (152 aa).

An SWIM-type zinc finger spans residues 76–114 (YTCLASCHYCSCPAFSFSVLRKSDSLLCKHLLAIYLSQL).

It belongs to the SWS1 family. Interacts with RAD51D and XRCC3; involved in homologous recombination repair. Interacts with SWSAP1; they form a functional complex involved in homologous recombination repair and stabilize each other.

It is found in the nucleus. Its function is as follows. Involved in early stages of the homologous recombination repair (HRR) pathway of double-stranded DNA breaks arising during DNA replication or induced by DNA-damaging agents. Required for meiotic progression, hence for fertility. The protein is Zinc finger SWIM domain-containing protein 7 (Zswim7) of Mus musculus (Mouse).